Reading from the N-terminus, the 448-residue chain is Exodeoxyribonuclease 7 large subunit (448 aa).

The protein belongs to the XseA family. As to quaternary structure, heterooligomer composed of large and small subunits.

It is found in the cytoplasm. The catalysed reaction is Exonucleolytic cleavage in either 5'- to 3'- or 3'- to 5'-direction to yield nucleoside 5'-phosphates.. Its function is as follows. Bidirectionally degrades single-stranded DNA into large acid-insoluble oligonucleotides, which are then degraded further into small acid-soluble oligonucleotides. The chain is Exodeoxyribonuclease 7 large subunit from Histophilus somni (strain 129Pt) (Haemophilus somnus).